Reading from the N-terminus, the 405-residue chain is MENSMTLPKIKQVRAWFTGGATAEKGAGGGDYHDQGANHWIDDHIATPMSKYRDYEQSRQSFGINVLGTLIVEVEAENGQTGFAVSTAGEMGCFIVEKHLNRFIEGKCVSDIKLIHDQMLNATLYYSGSGGLVMNTISCVDLALWDLFGKVVGLPVYKLLGGAVRDEIQFYATGARPDLAKEMGFIGGKMPTHWGPHDGDAGIRKDAAMVADMREKCGEDFWLMLDCWMSQDVNYATKLAHACAPYNLKWIEECLPPQQYEGYRELKRNAPAGMMVTSGEHHGTLQSFRTLSETGIDIMQPDVGWCGGLTTLVEIAAIAKSRGQLVVPHGSSVYSHHAVITFTNTPFSEFLMTSPDCSTMRPQFDPILLNEPVPVNGRIHKSVLDKPGFGVELNRDCNLKRPYSH.

Positions 33 and 59 each coordinate substrate. The Mg(2+) site is built by D226, E252, and E280. H329 serves as the catalytic Proton acceptor. E349 provides a ligand contact to substrate.

The protein belongs to the mandelate racemase/muconate lactonizing enzyme family. RhamD subfamily. Homooctamer; tetramer of dimers. Mg(2+) is required as a cofactor.

The enzyme catalyses L-rhamnonate = 2-dehydro-3-deoxy-L-rhamnonate + H2O. In terms of biological role, catalyzes the dehydration of L-rhamnonate to 2-keto-3-deoxy-L-rhamnonate (KDR). This Escherichia coli (strain SMS-3-5 / SECEC) protein is L-rhamnonate dehydratase.